A 258-amino-acid chain; its full sequence is Proteasome subunit alpha (258 aa).

The protein belongs to the peptidase T1A family. In terms of assembly, the 20S proteasome core is composed of 14 alpha and 14 beta subunits that assemble into four stacked heptameric rings, resulting in a barrel-shaped structure. The two inner rings, each composed of seven catalytic beta subunits, are sandwiched by two outer rings, each composed of seven alpha subunits. The catalytic chamber with the active sites is on the inside of the barrel. Has a gated structure, the ends of the cylinder being occluded by the N-termini of the alpha-subunits. Is capped at one or both ends by the proteasome regulatory ATPase, PAN.

It is found in the cytoplasm. The formation of the proteasomal ATPase PAN-20S proteasome complex, via the docking of the C-termini of PAN into the intersubunit pockets in the alpha-rings, triggers opening of the gate for substrate entry. Interconversion between the open-gate and close-gate conformations leads to a dynamic regulation of the 20S proteasome proteolysis activity. In terms of biological role, component of the proteasome core, a large protease complex with broad specificity involved in protein degradation. In Aeropyrum pernix (strain ATCC 700893 / DSM 11879 / JCM 9820 / NBRC 100138 / K1), this protein is Proteasome subunit alpha.